Here is a 486-residue protein sequence, read N- to C-terminus: Protein nucleotidyltransferase YdiU (486 aa).

ATP is bound by residues glycine 90, glycine 92, arginine 93, lysine 113, aspartate 125, glycine 126, arginine 176, and arginine 183. Catalysis depends on aspartate 252, which acts as the Proton acceptor. Positions 253 and 262 each coordinate Mg(2+). Aspartate 262 contributes to the ATP binding site.

The protein belongs to the SELO family. Mg(2+) serves as cofactor. Mn(2+) is required as a cofactor.

It carries out the reaction L-seryl-[protein] + ATP = 3-O-(5'-adenylyl)-L-seryl-[protein] + diphosphate. It catalyses the reaction L-threonyl-[protein] + ATP = 3-O-(5'-adenylyl)-L-threonyl-[protein] + diphosphate. The catalysed reaction is L-tyrosyl-[protein] + ATP = O-(5'-adenylyl)-L-tyrosyl-[protein] + diphosphate. The enzyme catalyses L-histidyl-[protein] + UTP = N(tele)-(5'-uridylyl)-L-histidyl-[protein] + diphosphate. It carries out the reaction L-seryl-[protein] + UTP = O-(5'-uridylyl)-L-seryl-[protein] + diphosphate. It catalyses the reaction L-tyrosyl-[protein] + UTP = O-(5'-uridylyl)-L-tyrosyl-[protein] + diphosphate. Nucleotidyltransferase involved in the post-translational modification of proteins. It can catalyze the addition of adenosine monophosphate (AMP) or uridine monophosphate (UMP) to a protein, resulting in modifications known as AMPylation and UMPylation. The sequence is that of Protein nucleotidyltransferase YdiU from Pseudomonas entomophila (strain L48).